The chain runs to 128 residues: Histone H2A type 1-H (128 aa).

The interval 1-22 is disordered; the sequence is MSGRGKQGGKARAKAKTRSSRA. An N-acetylserine modification is found at S2. S2 is subject to Phosphoserine; by RPS6KA5. At R4 the chain carries Citrulline; alternate. The residue at position 4 (R4) is a Symmetric dimethylarginine; by PRMT5; alternate. Residues K6 and K10 each carry the N6-(2-hydroxyisobutyryl)lysine; alternate modification. At K6 the chain carries N6-(beta-hydroxybutyryl)lysine; alternate. Positions 7–19 are enriched in basic residues; the sequence is QGGKARAKAKTRS. An N6-lactoyllysine; alternate modification is found at K10. The residue at position 10 (K10) is an N6-succinyllysine; alternate. Glycyl lysine isopeptide (Lys-Gly) (interchain with G-Cter in ubiquitin) cross-links involve residues K14 and K16. K37 is modified (N6-(2-hydroxyisobutyryl)lysine; alternate). K37 carries the N6-(beta-hydroxybutyryl)lysine; alternate modification. At K37 the chain carries N6-crotonyllysine; alternate. Residues K75 and K76 each carry the N6-(2-hydroxyisobutyryl)lysine modification. N6-(2-hydroxyisobutyryl)lysine; alternate is present on K96. K96 bears the N6-succinyllysine; alternate mark. N6-glutaryllysine; alternate is present on K96. Q105 bears the N5-methylglutamine mark. N6-(2-hydroxyisobutyryl)lysine; alternate is present on K119. Residues K119 and K120 each carry the N6-crotonyllysine; alternate modification. Residues K119 and K120 each carry the N6-glutaryllysine; alternate modification. K120 is subject to N6-(beta-hydroxybutyryl)lysine; alternate. Residue K120 forms a Glycyl lysine isopeptide (Lys-Gly) (interchain with G-Cter in ubiquitin); alternate linkage. At T121 the chain carries Phosphothreonine; by DCAF1. K126 is subject to N6-(beta-hydroxybutyryl)lysine; alternate. N6-crotonyllysine; alternate is present on K126. An N6-glutaryllysine; alternate modification is found at K126.

It belongs to the histone H2A family. As to quaternary structure, the nucleosome is a histone octamer containing two molecules each of H2A, H2B, H3 and H4 assembled in one H3-H4 heterotetramer and two H2A-H2B heterodimers. The octamer wraps approximately 147 bp of DNA. In terms of processing, deiminated on Arg-4 in granulocytes upon calcium entry. Monoubiquitination of Lys-120 (H2AK119Ub) by RING1, TRIM37 and RNF2/RING2 complex gives a specific tag for epigenetic transcriptional repression and participates in X chromosome inactivation of female mammals. It is involved in the initiation of both imprinted and random X inactivation. Ubiquitinated H2A is enriched in inactive X chromosome chromatin. Ubiquitination of H2A functions downstream of methylation of 'Lys-27' of histone H3 (H3K27me). H2AK119Ub by RNF2/RING2 can also be induced by ultraviolet and may be involved in DNA repair. Following DNA double-strand breaks (DSBs), it is ubiquitinated through 'Lys-63' linkage of ubiquitin moieties by the E2 ligase UBE2N and the E3 ligases RNF8 and RNF168, leading to the recruitment of repair proteins to sites of DNA damage. Ubiquitination at Lys-14 and Lys-16 (H2AK13Ub and H2AK15Ub, respectively) in response to DNA damage is initiated by RNF168 that mediates monoubiquitination at these 2 sites, and 'Lys-63'-linked ubiquitin are then conjugated to monoubiquitin; RNF8 is able to extend 'Lys-63'-linked ubiquitin chains in vitro. H2AK119Ub and ionizing radiation-induced 'Lys-63'-linked ubiquitination (H2AK13Ub and H2AK15Ub) are distinct events. Post-translationally, phosphorylation on Ser-2 (H2AS1ph) is enhanced during mitosis. Phosphorylation on Ser-2 by RPS6KA5/MSK1 directly represses transcription. Acetylation of H3 inhibits Ser-2 phosphorylation by RPS6KA5/MSK1. Phosphorylation at Thr-121 (H2AT120ph) by DCAF1 is present in the regulatory region of many tumor suppresor genes and down-regulates their transcription. In terms of processing, symmetric dimethylation on Arg-4 by the PRDM1/PRMT5 complex may play a crucial role in the germ-cell lineage. Glutamine methylation at Gln-105 (H2AQ104me) by FBL is specifically dedicated to polymerase I. It is present at 35S ribosomal DNA locus and impairs binding of the FACT complex. Post-translationally, crotonylation (Kcr) is specifically present in male germ cells and marks testis-specific genes in post-meiotic cells, including X-linked genes that escape sex chromosome inactivation in haploid cells. Crotonylation marks active promoters and enhancers and confers resistance to transcriptional repressors. It is also associated with post-meiotically activated genes on autosomes. In terms of processing, hydroxybutyrylation of histones is induced by starvation. Lactylated in macrophages by EP300/P300 by using lactoyl-CoA directly derived from endogenous or exogenous lactate, leading to stimulates gene transcription.

The protein resides in the nucleus. It is found in the chromosome. Its function is as follows. Core component of nucleosome. Nucleosomes wrap and compact DNA into chromatin, limiting DNA accessibility to the cellular machineries which require DNA as a template. Histones thereby play a central role in transcription regulation, DNA repair, DNA replication and chromosomal stability. DNA accessibility is regulated via a complex set of post-translational modifications of histones, also called histone code, and nucleosome remodeling. The sequence is that of Histone H2A type 1-H from Mus musculus (Mouse).